The following is a 153-amino-acid chain: Regulatory protein RecX (153 aa).

It belongs to the RecX family.

The protein localises to the cytoplasm. Its function is as follows. Modulates RecA activity. In Mannheimia succiniciproducens (strain KCTC 0769BP / MBEL55E), this protein is Regulatory protein RecX.